A 358-amino-acid chain; its full sequence is Phospho-N-acetylmuramoyl-pentapeptide-transferase (358 aa).

The next 10 membrane-spanning stretches (helical) occupy residues 25–45 (RTIY…PWVI), 73–93 (TMGG…WADL), 97–117 (YVWT…TDDY), 134–154 (MFWQ…VAGM), 172–192 (YLYI…VNLT), 197–217 (GLAI…AYIA), 233–253 (GAGE…GFLW), 261–281 (VFMG…LAVI), 286–306 (MLLV…IFQV), and 335–355 (KIIV…ISTL).

It belongs to the glycosyltransferase 4 family. MraY subfamily. The cofactor is Mg(2+).

The protein localises to the cell inner membrane. The catalysed reaction is UDP-N-acetyl-alpha-D-muramoyl-L-alanyl-gamma-D-glutamyl-meso-2,6-diaminopimeloyl-D-alanyl-D-alanine + di-trans,octa-cis-undecaprenyl phosphate = di-trans,octa-cis-undecaprenyl diphospho-N-acetyl-alpha-D-muramoyl-L-alanyl-D-glutamyl-meso-2,6-diaminopimeloyl-D-alanyl-D-alanine + UMP. Its pathway is cell wall biogenesis; peptidoglycan biosynthesis. Its function is as follows. Catalyzes the initial step of the lipid cycle reactions in the biosynthesis of the cell wall peptidoglycan: transfers peptidoglycan precursor phospho-MurNAc-pentapeptide from UDP-MurNAc-pentapeptide onto the lipid carrier undecaprenyl phosphate, yielding undecaprenyl-pyrophosphoryl-MurNAc-pentapeptide, known as lipid I. The chain is Phospho-N-acetylmuramoyl-pentapeptide-transferase from Geobacter sulfurreducens (strain ATCC 51573 / DSM 12127 / PCA).